Consider the following 203-residue polypeptide: E3 ubiquitin-protein ligase RNF152 (203 aa).

The segment at 12–55 (CQICFNYYSPRRRPKLLDCKHTCCSVCLQQMRTSQKDLRCPWCR) adopts an RING-type zinc-finger fold. Residues 167-187 (SGVCTVILVACVLVFLLGIVL) traverse the membrane as a helical segment.

Belongs to the RNF152 family.

It localises to the lysosome membrane. The catalysed reaction is S-ubiquitinyl-[E2 ubiquitin-conjugating enzyme]-L-cysteine + [acceptor protein]-L-lysine = [E2 ubiquitin-conjugating enzyme]-L-cysteine + N(6)-ubiquitinyl-[acceptor protein]-L-lysine.. Its pathway is protein modification; protein ubiquitination. Functionally, E3 ubiquitin-protein ligase that acts as a negative regulator of mTORC1 signaling by mediating ubiquitination of RagA/RRAGA and RHEB. Catalyzes 'Lys-63'-linked polyubiquitination of RagA/RRAGA in response to amino acid starvation, thereby regulating mTORC1 signaling. Also mediates monoubiquitination of RHEB, promoting its association with the TSC-TBC complex and subsequent inhibition. Also mediates 'Lys-48'-linked polyubiquitination of target proteins and their subsequent targeting to the proteasome for degradation. This chain is E3 ubiquitin-protein ligase RNF152, found in Gallus gallus (Chicken).